A 264-amino-acid chain; its full sequence is Triosephosphate isomerase (264 aa).

12-14 (NWK) is a substrate binding site. The active-site Electrophile is the histidine 104. Glutamate 176 (proton acceptor) is an active-site residue. Substrate-binding positions include glycine 182, serine 222, and 243-244 (GG).

The protein belongs to the triosephosphate isomerase family. In terms of assembly, homodimer.

It localises to the cytoplasm. The catalysed reaction is D-glyceraldehyde 3-phosphate = dihydroxyacetone phosphate. The protein operates within carbohydrate biosynthesis; gluconeogenesis. It functions in the pathway carbohydrate degradation; glycolysis; D-glyceraldehyde 3-phosphate from glycerone phosphate: step 1/1. In terms of biological role, involved in the gluconeogenesis. Catalyzes stereospecifically the conversion of dihydroxyacetone phosphate (DHAP) to D-glyceraldehyde-3-phosphate (G3P). This is Triosephosphate isomerase from Bifidobacterium adolescentis (strain ATCC 15703 / DSM 20083 / NCTC 11814 / E194a).